The chain runs to 301 residues: Acetylglutamate kinase (301 aa).

Substrate is bound by residues 68-69, R90, and N195; that span reads GG.

It belongs to the acetylglutamate kinase family. ArgB subfamily.

The protein localises to the cytoplasm. The catalysed reaction is N-acetyl-L-glutamate + ATP = N-acetyl-L-glutamyl 5-phosphate + ADP. It participates in amino-acid biosynthesis; L-arginine biosynthesis; N(2)-acetyl-L-ornithine from L-glutamate: step 2/4. Its function is as follows. Catalyzes the ATP-dependent phosphorylation of N-acetyl-L-glutamate. This Pseudomonas paraeruginosa (strain DSM 24068 / PA7) (Pseudomonas aeruginosa (strain PA7)) protein is Acetylglutamate kinase.